Reading from the N-terminus, the 474-residue chain is Dihydrolipoyl dehydrogenase (474 aa).

FAD-binding positions include Glu-39–Cys-47, Lys-56, and Ala-118. A disulfide bridge connects residues Cys-47 and Cys-52. NAD(+) contacts are provided by residues Gly-186–Ile-190, Glu-209, and Ala-275–Arg-278. Asp-318 and Ala-326 together coordinate FAD. His-450 acts as the Proton acceptor in catalysis.

The protein belongs to the class-I pyridine nucleotide-disulfide oxidoreductase family. Homodimer. The cofactor is FAD.

Its subcellular location is the cytoplasm. It catalyses the reaction N(6)-[(R)-dihydrolipoyl]-L-lysyl-[protein] + NAD(+) = N(6)-[(R)-lipoyl]-L-lysyl-[protein] + NADH + H(+). The protein is Dihydrolipoyl dehydrogenase (lpdA) of Halobacterium salinarum (strain ATCC 700922 / JCM 11081 / NRC-1) (Halobacterium halobium).